The following is a 154-amino-acid chain: MKAVLQRVAEARVVVAGETVGQIGQGLLVLVCAERGDAEGQADKLLAKILKLRIFSDEAGKMNRSVQDLDGAGKQGGLLIVSQFTLAADVSGGNRPSFTDAAAPDEGRRLYDYFVAQALALHPMVQTGQFAADMQVHLVNDGPVTIPLHIDPAA.

The Gly-cisPro motif, important for rejection of L-amino acids signature appears at 142–143; the sequence is GP.

Belongs to the DTD family. Homodimer.

It localises to the cytoplasm. It carries out the reaction glycyl-tRNA(Ala) + H2O = tRNA(Ala) + glycine + H(+). The enzyme catalyses a D-aminoacyl-tRNA + H2O = a tRNA + a D-alpha-amino acid + H(+). In terms of biological role, an aminoacyl-tRNA editing enzyme that deacylates mischarged D-aminoacyl-tRNAs. Also deacylates mischarged glycyl-tRNA(Ala), protecting cells against glycine mischarging by AlaRS. Acts via tRNA-based rather than protein-based catalysis; rejects L-amino acids rather than detecting D-amino acids in the active site. By recycling D-aminoacyl-tRNA to D-amino acids and free tRNA molecules, this enzyme counteracts the toxicity associated with the formation of D-aminoacyl-tRNA entities in vivo and helps enforce protein L-homochirality. The polypeptide is D-aminoacyl-tRNA deacylase (Polaromonas sp. (strain JS666 / ATCC BAA-500)).